The primary structure comprises 455 residues: Ribulose bisphosphate carboxylase large chain (455 aa).

N6,N6,N6-trimethyllysine is present on lysine 5. Substrate is bound by residues asparagine 114 and threonine 164. The active-site Proton acceptor is lysine 166. Lysine 168 is a substrate binding site. Mg(2+) contacts are provided by lysine 192, aspartate 194, and glutamate 195. Lysine 192 is subject to N6-carboxylysine. Histidine 285 functions as the Proton acceptor in the catalytic mechanism. Substrate is bound by residues arginine 286, histidine 318, and serine 370.

It belongs to the RuBisCO large chain family. Type I subfamily. As to quaternary structure, heterohexadecamer of 8 large chains and 8 small chains; disulfide-linked. The disulfide link is formed within the large subunit homodimers. Requires Mg(2+) as cofactor. Post-translationally, the disulfide bond which can form in the large chain dimeric partners within the hexadecamer appears to be associated with oxidative stress and protein turnover.

The protein localises to the plastid. It localises to the chloroplast. It catalyses the reaction 2 (2R)-3-phosphoglycerate + 2 H(+) = D-ribulose 1,5-bisphosphate + CO2 + H2O. The catalysed reaction is D-ribulose 1,5-bisphosphate + O2 = 2-phosphoglycolate + (2R)-3-phosphoglycerate + 2 H(+). Its function is as follows. RuBisCO catalyzes two reactions: the carboxylation of D-ribulose 1,5-bisphosphate, the primary event in carbon dioxide fixation, as well as the oxidative fragmentation of the pentose substrate in the photorespiration process. Both reactions occur simultaneously and in competition at the same active site. This is Ribulose bisphosphate carboxylase large chain from Lupinus microcarpus var. densiflorus (Whitewhorl lupine).